A 156-amino-acid polypeptide reads, in one-letter code: Organelle RRM domain-containing protein 2, mitochondrial (156 aa).

The transit peptide at 1 to 28 (MAMAMRLPAISRAVTEVASAPVGLRRLF) directs the protein to the mitochondrion. Residues 56-134 (TNLFVSGLSK…WVIFAEYARP (79 aa)) enclose the RRM domain. Ser-64 is subject to Phosphoserine. Residues 137-148 (QSQSYQPQNNMS) are compositionally biased toward polar residues. The interval 137–156 (QSQSYQPQNNMSRPPYYGNR) is disordered.

As to quaternary structure, interacts with RBG3/ORRM3. Binds to RBG2/ORRM5.

Its subcellular location is the mitochondrion. Its function is as follows. Involved in C-to-U editing of mitochondrial RNA. Functions as minor mitochondrial editing factor. Controls 6 percent of the mitochondrial editing sites. This is Organelle RRM domain-containing protein 2, mitochondrial from Arabidopsis thaliana (Mouse-ear cress).